A 167-amino-acid polypeptide reads, in one-letter code: ATP synthase subunit delta, mitochondrial (167 aa).

Residues 1–28 (MFRLSNYMLRKSQFPQGLVRAPFGIRGY) constitute a mitochondrion transit peptide.

This sequence belongs to the ATPase epsilon chain family. In terms of assembly, F-type ATPases have 2 components, CF(1) - the catalytic core - and CF(0) - the membrane proton channel. CF(1) has five subunits: alpha(3), beta(3), gamma(1), delta(1), epsilon(1). CF(0) has three main subunits: a, b and c.

It localises to the mitochondrion. Its subcellular location is the mitochondrion inner membrane. Mitochondrial membrane ATP synthase (F(1)F(0) ATP synthase or Complex V) produces ATP from ADP in the presence of a proton gradient across the membrane which is generated by electron transport complexes of the respiratory chain. F-type ATPases consist of two structural domains, F(1) - containing the extramembraneous catalytic core, and F(0) - containing the membrane proton channel, linked together by a central stalk and a peripheral stalk. During catalysis, ATP turnover in the catalytic domain of F(1) is coupled via a rotary mechanism of the central stalk subunits to proton translocation. Part of the complex F(1) domain and of the central stalk which is part of the complex rotary element. Rotation of the central stalk against the surrounding alpha(3)beta(3) subunits leads to hydrolysis of ATP in three separate catalytic sites on the beta subunits. The protein is ATP synthase subunit delta, mitochondrial (atp16) of Schizosaccharomyces pombe (strain 972 / ATCC 24843) (Fission yeast).